A 217-amino-acid polypeptide reads, in one-letter code: Ependymin (217 aa).

A signal peptide spans methionine 1–alanine 20. Residues asparagine 73 and asparagine 96 are each glycosylated (N-linked (GlcNAc...) asparagine).

It belongs to the ependymin family. In terms of assembly, forms disulfide-linked dimers. Post-translationally, binds calcium through the terminal sialic acids. EPDs are synthesized in the meninx and secreted in the cerebrospinal fluid.

It is found in the secreted. Its function is as follows. May play a role in neural plasticity. May be involved during axon regeneration. In Danio rerio (Zebrafish), this protein is Ependymin (epd).